Consider the following 245-residue polypeptide: 3-deoxy-manno-octulosonate cytidylyltransferase (245 aa).

This sequence belongs to the KdsB family.

It localises to the cytoplasm. The catalysed reaction is 3-deoxy-alpha-D-manno-oct-2-ulosonate + CTP = CMP-3-deoxy-beta-D-manno-octulosonate + diphosphate. Its pathway is nucleotide-sugar biosynthesis; CMP-3-deoxy-D-manno-octulosonate biosynthesis; CMP-3-deoxy-D-manno-octulosonate from 3-deoxy-D-manno-octulosonate and CTP: step 1/1. It participates in bacterial outer membrane biogenesis; lipopolysaccharide biosynthesis. Activates KDO (a required 8-carbon sugar) for incorporation into bacterial lipopolysaccharide in Gram-negative bacteria. In Desulfatibacillum aliphaticivorans, this protein is 3-deoxy-manno-octulosonate cytidylyltransferase.